Reading from the N-terminus, the 147-residue chain is Hemoglobin subunit beta (147 aa).

Residues 3-147 (HWTAEEKQLI…VAHALARKYH (145 aa)) enclose the Globin domain. His-64 and His-93 together coordinate heme b.

It belongs to the globin family. As to quaternary structure, heterotetramer of two alpha chains and two beta chains. As to expression, red blood cells.

Involved in oxygen transport from the lung to the various peripheral tissues. In Cairina moschata (Muscovy duck), this protein is Hemoglobin subunit beta (HBB).